Reading from the N-terminus, the 128-residue chain is Fluoride-specific ion channel FluC (128 aa).

Transmembrane regions (helical) follow at residues 3–23, 33–53, 69–89, and 99–119; these read LYAL…RWWF, TLPL…GAAI, FAIT…AETV, and WTFV…ILGI. 2 residues coordinate Na(+): G76 and T79.

It belongs to the fluoride channel Fluc/FEX (TC 1.A.43) family.

It is found in the cell inner membrane. It catalyses the reaction fluoride(in) = fluoride(out). Its activity is regulated as follows. Na(+) is not transported, but it plays an essential structural role and its presence is essential for fluoride channel function. Functionally, fluoride-specific ion channel. Important for reducing fluoride concentration in the cell, thus reducing its toxicity. In Nitrosospira multiformis (strain ATCC 25196 / NCIMB 11849 / C 71), this protein is Fluoride-specific ion channel FluC.